The chain runs to 833 residues: V-type proton ATPase 116 kDa subunit a 4 (833 aa).

Residues 1–390 are Cytoplasmic-facing; that stretch reads MASVFRSEEM…DAYGVGSYRE (390 aa). Residues 391 to 409 form a helical membrane-spanning segment; it reads INPAPYTIITFPFLFAVMF. Topologically, residues 410 to 411 are vacuolar; the sequence is GD. The chain crosses the membrane as a helical span at residues 412-428; that stretch reads CGHGMVMLMAALWMVLN. Topologically, residues 429 to 443 are cytoplasmic; sequence ERHLLAQKSTNEMWN. The helical transmembrane segment at 444 to 473 threads the bilayer; sequence IFFNGRYLILLMGIFSIYTGLIYNDCFSKS. Residues 474 to 538 are Vacuolar-facing; sequence FNIFGSSWSV…ASNKLTFLNS (65 aa). The chain crosses the membrane as a helical span at residues 539–558; the sequence is YKMKMSVILGIAHMIFGVIL. Over 559–576 the chain is Cytoplasmic; sequence SLFNHIYFRRTLNIILQF. The chain crosses the membrane as a helical span at residues 577 to 597; the sequence is IPEMIFMLSLFGYLVFMIIFK. Topologically, residues 598 to 642 are vacuolar; it reads WCRYDAHTSRKAPSILIHFIGMFLFDYDDSSNAPLYGHQQEVQTF. Residues 643-662 form a helical membrane-spanning segment; sequence FVIIALVSVPWMLLIKPFVL. The Cytoplasmic portion of the chain corresponds to 663-720; it reads RAKHQKSQLQSFTIHEDAVEGDHSGHSSKKTAGAHGMKDGHEEEFNFGDIFVHQAIHT. Residues 681 to 700 form a disordered region; that stretch reads VEGDHSGHSSKKTAGAHGMK. A helical transmembrane segment spans residues 721-745; the sequence is IEYCLGCISNTASYLRLWALSLAHA. The Vacuolar portion of the chain corresponds to 746–766; the sequence is ELSEVLWTMVMSIGLRLQGWA. A helical transmembrane segment spans residues 767–805; it reads GLVGVFIIFAVFAVLTVAILLVMEGLSAFLHALRLHWVE. The Cytoplasmic segment spans residues 806–833; that stretch reads FQNKFYEGAGSKFSPFSFKHVLEGTAEE.

The protein belongs to the V-ATPase 116 kDa subunit family. In terms of assembly, V-ATPase is a heteromultimeric enzyme made up of two complexes: the ATP-hydrolytic V1 complex and the proton translocation V0 complex. The V1 complex consists of three catalytic AB heterodimers that form a heterohexamer, three peripheral stalks each consisting of EG heterodimers, one central rotor including subunits D and F, and the regulatory subunits C and H. The proton translocation complex V0 consists of the proton transport subunit a, a ring of proteolipid subunits c9c'', rotary subunit d, subunits e and f, and the accessory subunits ATP6AP1/Ac45 and ATP6AP2/PRR. Interacts with the V1 complex V-ATPase subunit A ATP6V1A. Interacts with the V0 complex V-ATPase subunit c ATP6V0C. As to expression, specifically expressed in kidney, but not in the heart, brain, spleen, lung, liver, muscle, or testis. Distribution within the kidney appears more widespread than that seen in man. High intensity staining at the surface of intercalated cells, with additional expression in the proximal tubule.

The protein resides in the apical cell membrane. The protein localises to the basolateral cell membrane. Its function is as follows. Subunit of the V0 complex of vacuolar(H+)-ATPase (V-ATPase), a multisubunit enzyme composed of a peripheral complex (V1) that hydrolyzes ATP and a membrane integral complex (V0) that translocates protons. V-ATPase is responsible for acidifying and maintaining the pH of intracellular compartments and in some cell types, is targeted to the plasma membrane, where it is responsible for acidifying the extracellular environment. Involved in normal vectorial acid transport into the urine by the kidney. The protein is V-type proton ATPase 116 kDa subunit a 4 (Atp6v0a4) of Mus musculus (Mouse).